The following is a 379-amino-acid chain: Flagellar P-ring protein (379 aa).

Positions 1–32 are cleaved as a signal peptide; sequence MTAPAGFLPRVGRLIAVALTAVFLLAPTGAEA.

The protein belongs to the FlgI family. The basal body constitutes a major portion of the flagellar organelle and consists of four rings (L,P,S, and M) mounted on a central rod.

Its subcellular location is the periplasm. It is found in the bacterial flagellum basal body. In terms of biological role, assembles around the rod to form the L-ring and probably protects the motor/basal body from shearing forces during rotation. The chain is Flagellar P-ring protein from Rhodospirillum rubrum (strain ATCC 11170 / ATH 1.1.1 / DSM 467 / LMG 4362 / NCIMB 8255 / S1).